Reading from the N-terminus, the 107-residue chain is MAGRSGDSDEELLKAVRIIKILYQSNPYPTPEGTRQARRNRRRRWRARQRQIHTLSERILSNFLGRPAEPVPLQLPPLERLNLDCSEDSGTSGTQQSQGTTEGVGNP.

Ser-5 and Ser-8 each carry phosphoserine; by host CK2. A homomultimerization region spans residues 18–26; that stretch reads IIKILYQSN. Disordered regions lie at residues 26–48 and 81–107; these read NPYP…WRAR and LNLD…VGNP. The Nuclear localization signal and RNA-binding (RRE) signature appears at 34-50; sequence TRQARRNRRRRWRARQR. The span at 36–48 shows a compositional bias: basic residues; that stretch reads QARRNRRRRWRAR. Residues 73-84 carry the Nuclear export signal and binding to XPO1 motif; it reads LQLPPLERLNLD. Residues 89 to 101 are compositionally biased toward low complexity; sequence SGTSGTQQSQGTT. Position 92 is a phosphoserine; by host (Ser-92).

It belongs to the HIV-1 REV protein family. As to quaternary structure, homomultimer; when bound to the RRE. Multimeric assembly is essential for activity and may involve XPO1. Binds to human KPNB1, XPO1, TNPO1, RANBP5 and IPO7. Interacts with the viral Integrase. Interacts with human KHDRBS1. Interacts with human NAP1; this interaction decreases Rev multimerization and stimulates its activity. Interacts with human DEAD-box helicases DDX3 and DDX24; these interactions may serve for viral RNA export to the cytoplasm and packaging, respectively. Interacts with human PSIP1; this interaction may inhibit HIV-1 DNA integration by promoting dissociation of the Integrase-LEDGF/p75 complex. Post-translationally, asymmetrically arginine dimethylated at one site by host PRMT6. Methylation impairs the RNA-binding activity and export of viral RNA from the nucleus to the cytoplasm. Phosphorylated by protein kinase CK2. Presence of, and maybe binding to the N-terminus of the regulatory beta subunit of CK2 is necessary for CK2-mediated Rev's phosphorylation.

Its subcellular location is the host nucleus. The protein localises to the host nucleolus. The protein resides in the host cytoplasm. In terms of biological role, escorts unspliced or incompletely spliced viral pre-mRNAs (late transcripts) out of the nucleus of infected cells. These pre-mRNAs carry a recognition sequence called Rev responsive element (RRE) located in the env gene, that is not present in fully spliced viral mRNAs (early transcripts). This function is essential since most viral proteins are translated from unspliced or partially spliced pre-mRNAs which cannot exit the nucleus by the pathway used by fully processed cellular mRNAs. Rev itself is translated from a fully spliced mRNA that readily exits the nucleus. Rev's nuclear localization signal (NLS) binds directly to KPNB1/Importin beta-1 without previous binding to KPNA1/Importin alpha-1. KPNB1 binds to the GDP bound form of RAN (Ran-GDP) and targets Rev to the nucleus. In the nucleus, the conversion from Ran-GDP to Ran-GTP dissociates Rev from KPNB1 and allows Rev's binding to the RRE in viral pre-mRNAs. Rev multimerization on the RRE via cooperative assembly exposes its nuclear export signal (NES) to the surface. Rev can then form a complex with XPO1/CRM1 and Ran-GTP, leading to nuclear export of the complex. Conversion from Ran-GTP to Ran-GDP mediates dissociation of the Rev/RRE/XPO1/RAN complex, so that Rev can return to the nucleus for a subsequent round of export. Beside KPNB1, also seems to interact with TNPO1/Transportin-1, RANBP5/IPO5 and IPO7/RANBP7 for nuclear import. The nucleoporin-like HRB/RIP is an essential cofactor that probably indirectly interacts with Rev to release HIV RNAs from the perinuclear region to the cytoplasm. The protein is Protein Rev of Homo sapiens (Human).